The following is a 257-amino-acid chain: DNA repair protein RecO (257 aa).

This sequence belongs to the RecO family.

Functionally, involved in DNA repair and RecF pathway recombination. The sequence is that of DNA repair protein RecO from Streptococcus sanguinis (strain SK36).